Consider the following 473-residue polypeptide: Photosystem II CP43 reaction center protein (473 aa).

The propeptide occupies 1 to 14; it reads MKTLYSLRRFYHVE. N-acetylthreonine is present on Thr15. Thr15 carries the post-translational modification Phosphothreonine. The next 5 membrane-spanning stretches (helical) occupy residues 69-93, 134-155, 178-200, 255-275, and 291-312; these read LFEV…PHLA, LLGP…KDRN, KALY…RKIT, KPFA…LSYS, and WFNN…ASQA. [CaMn4O5] cluster is bound at residue Glu367. The helical transmembrane segment at 447-471 threads the bilayer; that stretch reads RARAAAAGFEKGIDRDFEPVLSMTP.

Belongs to the PsbB/PsbC family. PsbC subfamily. As to quaternary structure, PSII is composed of 1 copy each of membrane proteins PsbA, PsbB, PsbC, PsbD, PsbE, PsbF, PsbH, PsbI, PsbJ, PsbK, PsbL, PsbM, PsbT, PsbX, PsbY, PsbZ, Psb30/Ycf12, at least 3 peripheral proteins of the oxygen-evolving complex and a large number of cofactors. It forms dimeric complexes. It depends on Binds multiple chlorophylls and provides some of the ligands for the Ca-4Mn-5O cluster of the oxygen-evolving complex. It may also provide a ligand for a Cl- that is required for oxygen evolution. PSII binds additional chlorophylls, carotenoids and specific lipids. as a cofactor.

It is found in the plastid. Its subcellular location is the chloroplast thylakoid membrane. In terms of biological role, one of the components of the core complex of photosystem II (PSII). It binds chlorophyll and helps catalyze the primary light-induced photochemical processes of PSII. PSII is a light-driven water:plastoquinone oxidoreductase, using light energy to abstract electrons from H(2)O, generating O(2) and a proton gradient subsequently used for ATP formation. This chain is Photosystem II CP43 reaction center protein, found in Manihot esculenta (Cassava).